Here is a 207-residue protein sequence, read N- to C-terminus: ATP synthase subunit a (207 aa).

A run of 6 helical transmembrane segments spans residues 3-23 (QHVI…TIFA), 62-82 (LIAS…IPGL), 88-108 (NLNT…FEGI), 119-139 (FLGP…LSHL), 158-178 (LISV…VMLI), and 180-200 (LIAV…YIAG).

The protein belongs to the ATPase A chain family. As to quaternary structure, F-type ATPases have 2 components, CF(1) - the catalytic core - and CF(0) - the membrane proton channel. CF(1) has five subunits: alpha(3), beta(3), gamma(1), delta(1), epsilon(1). CF(0) has three main subunits: a(1), b(2) and c(9-12). The alpha and beta chains form an alternating ring which encloses part of the gamma chain. CF(1) is attached to CF(0) by a central stalk formed by the gamma and epsilon chains, while a peripheral stalk is formed by the delta and b chains.

The protein localises to the cell inner membrane. Key component of the proton channel; it plays a direct role in the translocation of protons across the membrane. The polypeptide is ATP synthase subunit a (Sulfurihydrogenibium sp. (strain YO3AOP1)).